A 330-amino-acid chain; its full sequence is Olfactory receptor 5T9 (330 aa).

The Extracellular segment spans residues 1 to 37; it reads MSIHSPGYTVRRIPVNNVTDTTMFILTGFTDDADLQV. N17 is a glycosylation site (N-linked (GlcNAc...) asparagine). Residues 38-58 traverse the membrane as a helical segment; sequence LLFLLFFVIYLFTLIGNLGLV. The Cytoplasmic segment spans residues 59-66; the sequence is LLVIGDSR. The helical transmembrane segment at 67-87 threads the bilayer; that stretch reads LHNPMYYFLSVLSFLDACYST. The Extracellular segment spans residues 88–111; that stretch reads VVTPKMLVNFISNDKSISYPGCVT. C109 and C201 are oxidised to a cystine. Residues 112 to 132 traverse the membrane as a helical segment; that stretch reads EMFLFVTFGTTECFLLAAMAY. At 133 to 145 the chain is on the cytoplasmic side; the sequence is DRFVAIYNPLLYA. Residues 146-166 form a helical membrane-spanning segment; sequence VKMSPRVYIPLIIACYSGGIM. Topologically, residues 167 to 208 are extracellular; sequence HATIHTVATFSLSFCASNEIRHVFCDIPPLLAISCSNTNINQ. A helical membrane pass occupies residues 209–229; it reads LLLFYCVGSIEIITILIVLVS. Residues 230 to 249 lie on the Cytoplasmic side of the membrane; it reads YSFILFAILKMNSAEGRRKI. A helical transmembrane segment spans residues 250-270; that stretch reads FSTCGSHLTGVSIYHGTILFM. Residues 271–283 are Extracellular-facing; it reads YVRPSSNYALEHD. A helical transmembrane segment spans residues 284 to 304; it reads MIVSTFYTIVIPMLNPIIYSL. The Cytoplasmic portion of the chain corresponds to 305–330; it reads RNKDVKEAMKKIFERNFFMNKVHFKL.

It belongs to the G-protein coupled receptor 1 family.

It is found in the cell membrane. Its function is as follows. Potential odorant receptor. The sequence is that of Olfactory receptor 5T9 from Mus musculus (Mouse).